The sequence spans 209 residues: Claudin-4 (209 aa).

At 1 to 9 (MASMGLQVT) the chain is on the cytoplasmic side. Positions 1–103 (MASMGLQVTG…GVLLSVVGGK (103 aa)) are interaction with EPHA2. The helical transmembrane segment at 10 to 30 (GIALAVLGWLAVMLCCALPMW) threads the bilayer. Residues 31–81 (RVTAFIGSNIVTSQTIWEGLWMNCVVQSTGQMQCKVYDSLLALPQDLQAAR) lie on the Extracellular side of the membrane. The cysteines at positions 54 and 64 are disulfide-linked. Residues 82–102 (ALVIISIIVAALGVLLSVVGG) form a helical membrane-spanning segment. Residues 103–117 (KCTNCLEDESAKAKT) lie on the Cytoplasmic side of the membrane. The helical transmembrane segment at 118 to 138 (MIVAGVVFLLAGLLVIVPVSW) threads the bilayer. Residues 139–160 (TAHNIIQDFYNPLVASGQKREM) lie on the Extracellular side of the membrane. The helical transmembrane segment at 161–181 (GASLYVGWAASGLLLLGGGLL) threads the bilayer. The Cytoplasmic segment spans residues 182–209 (CCNCPPRTDKPYSAKYSAARSAAASNYV). The residue at position 208 (Y208) is a Phosphotyrosine; by EPHA2. Residues 208 to 209 (YV) form an interactions with TJP1, TJP2 and TJP3 region.

Belongs to the claudin family. Interacts with EPHA2; phosphorylates CLDN4 and may regulate tight junctions. Directly interacts with TJP1/ZO-1, TJP2/ZO-2 and TJP3/ZO-3. Interacts with CLDN1. Interacts with CLDN8. In terms of processing, phosphorylated. Phosphorylation by EPHA2 is stimulated by EFNA1 and alters interaction with TJP1.

Its subcellular location is the cell junction. It localises to the tight junction. The protein resides in the cell membrane. Channel-forming tight junction protein that mediates paracellular chloride transport in the kidney. Plays a critical role in the paracellular reabsorption of filtered chloride in the kidney collecting ducts. Claudins play a major role in tight junction-specific obliteration of the intercellular space, through calcium-independent cell-adhesion activity. This is Claudin-4 (CLDN4) from Chlorocebus aethiops (Green monkey).